A 310-amino-acid chain; its full sequence is Tagatose-6-phosphate kinase (310 aa).

The protein belongs to the carbohydrate kinase PfkB family. LacC subfamily.

The enzyme catalyses D-tagatofuranose 6-phosphate + ATP = D-tagatofuranose 1,6-bisphosphate + ADP + H(+). It participates in carbohydrate metabolism; D-tagatose 6-phosphate degradation; D-glyceraldehyde 3-phosphate and glycerone phosphate from D-tagatose 6-phosphate: step 1/2. The chain is Tagatose-6-phosphate kinase from Staphylococcus aureus (strain bovine RF122 / ET3-1).